Here is a 327-residue protein sequence, read N- to C-terminus: Aspartate--ammonia ligase (327 aa).

The protein belongs to the class-II aminoacyl-tRNA synthetase family. AsnA subfamily.

It is found in the cytoplasm. The enzyme catalyses L-aspartate + NH4(+) + ATP = L-asparagine + AMP + diphosphate + H(+). It participates in amino-acid biosynthesis; L-asparagine biosynthesis; L-asparagine from L-aspartate (ammonia route): step 1/1. The polypeptide is Aspartate--ammonia ligase (Bacillus cereus (strain G9842)).